We begin with the raw amino-acid sequence, 493 residues long: Galactose-1-phosphate uridylyltransferase (493 aa).

This sequence belongs to the galactose-1-phosphate uridylyltransferase type 2 family.

The protein localises to the cytoplasm. It catalyses the reaction alpha-D-galactose 1-phosphate + UDP-alpha-D-glucose = alpha-D-glucose 1-phosphate + UDP-alpha-D-galactose. The protein operates within carbohydrate metabolism; galactose metabolism. In Streptococcus thermophilus (strain CNRZ 1066), this protein is Galactose-1-phosphate uridylyltransferase.